The following is a 185-amino-acid chain: Ribosome-recycling factor (185 aa).

It belongs to the RRF family.

The protein resides in the cytoplasm. In terms of biological role, responsible for the release of ribosomes from messenger RNA at the termination of protein biosynthesis. May increase the efficiency of translation by recycling ribosomes from one round of translation to another. This Streptococcus equi subsp. equi (strain 4047) protein is Ribosome-recycling factor.